A 314-amino-acid polypeptide reads, in one-letter code: Olfactory receptor 1C1 (314 aa).

The Extracellular segment spans residues 1-25 (MEKRNLTVVREFVLLGLPSSAEQQH). Residues 26–49 (LLSVLFLCMYLATTLGNMLIIATI) traverse the membrane as a helical segment. Topologically, residues 50-57 (GFDSHLHS) are cytoplasmic. A helical transmembrane segment spans residues 58–79 (PMYFFLSNLAFVDICFTSTTVP). Residues 80-100 (QMVVNILTGTKTISFAGCLTQ) are Extracellular-facing. A disulfide bridge connects residues cysteine 97 and cysteine 189. Residues 101–120 (LFFFVSFVNMDSLLLCVMAY) traverse the membrane as a helical segment. Residues 121–139 (DRYVAICHPLHYTARMNLC) lie on the Cytoplasmic side of the membrane. Residues 140-158 (LCVQLVAGLWLVTYLHALL) traverse the membrane as a helical segment. Topologically, residues 159-195 (HTVLIAQLSFCASNIIHHFFCDLNPLLQLSCSDVSFN) are extracellular. Residues 196-219 (VMIIFAVGGLLALTPLVCILVSYG) traverse the membrane as a helical segment. Residues 220–236 (LIFSTVLKITSTQGKQR) are Cytoplasmic-facing. A helical membrane pass occupies residues 237–259 (AVSTCSCHLSVVVLFYGTAIAVY). Over 260-272 (FSPSSPHMPESDT) the chain is Extracellular. Residues 273-292 (LSTIMYSMVAPMLNPFIYTL) traverse the membrane as a helical segment. At 293 to 314 (RNRDMKRGLQKMLLKCTVFQQQ) the chain is on the cytoplasmic side.

Belongs to the G-protein coupled receptor 1 family.

The protein resides in the cell membrane. Functionally, odorant receptor. The protein is Olfactory receptor 1C1 (OR1C1) of Homo sapiens (Human).